A 29-amino-acid chain; its full sequence is GLWSKIKDAGKAVLKAAGKAALGAVTDAV.

As to expression, expressed by the skin glands.

It localises to the secreted. Its function is as follows. Has antimicrobial activity. The chain is Dermaseptin-9TR from Phyllomedusa trinitatis (Trinidad leaf frog).